Consider the following 534-residue polypeptide: Probable DNA ligase (534 aa).

Position 213 (glutamate 213) interacts with ATP. The active-site N6-AMP-lysine intermediate is lysine 215. ATP-binding residues include arginine 220, arginine 235, glutamate 264, phenylalanine 303, arginine 375, and lysine 381.

This sequence belongs to the ATP-dependent DNA ligase family. Mg(2+) is required as a cofactor.

It catalyses the reaction ATP + (deoxyribonucleotide)n-3'-hydroxyl + 5'-phospho-(deoxyribonucleotide)m = (deoxyribonucleotide)n+m + AMP + diphosphate.. Its function is as follows. DNA ligase that seals nicks in double-stranded DNA during DNA replication, DNA recombination and DNA repair. This chain is Probable DNA ligase, found in Mycolicibacterium vanbaalenii (strain DSM 7251 / JCM 13017 / BCRC 16820 / KCTC 9966 / NRRL B-24157 / PYR-1) (Mycobacterium vanbaalenii).